The primary structure comprises 75 residues: uncharacterized protein (75 aa).

The N-terminal stretch at M1–A19 is a signal peptide. C20 carries N-palmitoyl cysteine lipidation. C20 is lipidated: S-diacylglycerol cysteine.

It to E.coli YgdR.

The protein resides in the cell membrane. This is an uncharacterized protein from Escherichia coli O6:H1 (strain CFT073 / ATCC 700928 / UPEC).